The following is a 557-amino-acid chain: Aerobic glycerol-3-phosphate dehydrogenase (557 aa).

An FAD-binding site is contributed by 21-49; the sequence is DVVIIGGGITGAGIALDASERGMKVALVE.

Belongs to the FAD-dependent glycerol-3-phosphate dehydrogenase family. It depends on FAD as a cofactor.

It localises to the cytoplasm. The enzyme catalyses a quinone + sn-glycerol 3-phosphate = dihydroxyacetone phosphate + a quinol. Its pathway is polyol metabolism; glycerol degradation via glycerol kinase pathway; glycerone phosphate from sn-glycerol 3-phosphate (aerobic route): step 1/1. The sequence is that of Aerobic glycerol-3-phosphate dehydrogenase (glpD) from Staphylococcus saprophyticus subsp. saprophyticus (strain ATCC 15305 / DSM 20229 / NCIMB 8711 / NCTC 7292 / S-41).